The primary structure comprises 128 residues: uncharacterized protein (128 aa).

The protein localises to the mitochondrion. This is an uncharacterized protein from Saccharomyces cerevisiae (strain ATCC 204508 / S288c) (Baker's yeast).